The chain runs to 172 residues: Macro domain-containing protein CT2219 (172 aa).

A Macro domain is found at 1–172 (MPDNVLIHAI…DVYQKALAAG (172 aa)).

This sequence belongs to the MacroD-type family.

The protein is Macro domain-containing protein CT2219 of Chlorobaculum tepidum (strain ATCC 49652 / DSM 12025 / NBRC 103806 / TLS) (Chlorobium tepidum).